Consider the following 130-residue polypeptide: ATP synthase epsilon chain (130 aa).

The protein belongs to the ATPase epsilon chain family. F-type ATPases have 2 components, CF(1) - the catalytic core - and CF(0) - the membrane proton channel. CF(1) has five subunits: alpha(3), beta(3), gamma(1), delta(1), epsilon(1). CF(0) has three main subunits: a, b and c.

The protein resides in the cell inner membrane. Functionally, produces ATP from ADP in the presence of a proton gradient across the membrane. The protein is ATP synthase epsilon chain (atpC) of Fuscovulum blasticum (Rhodobacter blasticus).